The sequence spans 323 residues: Lipoyl synthase (323 aa).

The [4Fe-4S] cluster site is built by Cys-61, Cys-66, Cys-72, Cys-87, Cys-91, Cys-94, and Ser-300. In terms of domain architecture, Radical SAM core spans 73-289; the sequence is WDKKHATFMI…ETVAYSKGFL (217 aa).

It belongs to the radical SAM superfamily. Lipoyl synthase family. The cofactor is [4Fe-4S] cluster.

Its subcellular location is the cytoplasm. The enzyme catalyses [[Fe-S] cluster scaffold protein carrying a second [4Fe-4S](2+) cluster] + N(6)-octanoyl-L-lysyl-[protein] + 2 oxidized [2Fe-2S]-[ferredoxin] + 2 S-adenosyl-L-methionine + 4 H(+) = [[Fe-S] cluster scaffold protein] + N(6)-[(R)-dihydrolipoyl]-L-lysyl-[protein] + 4 Fe(3+) + 2 hydrogen sulfide + 2 5'-deoxyadenosine + 2 L-methionine + 2 reduced [2Fe-2S]-[ferredoxin]. It participates in protein modification; protein lipoylation via endogenous pathway; protein N(6)-(lipoyl)lysine from octanoyl-[acyl-carrier-protein]: step 2/2. In terms of biological role, catalyzes the radical-mediated insertion of two sulfur atoms into the C-6 and C-8 positions of the octanoyl moiety bound to the lipoyl domains of lipoate-dependent enzymes, thereby converting the octanoylated domains into lipoylated derivatives. The chain is Lipoyl synthase from Rhizobium etli (strain ATCC 51251 / DSM 11541 / JCM 21823 / NBRC 15573 / CFN 42).